The chain runs to 2049 residues: Nonribosomal peptide synthetase tcpP (2049 aa).

The adenylation 1 stretch occupies residues 13–395 (RHHAEAHPEA…LGRKDQLIKN (383 aa)). Positions 497–573 (ATADTKLSAL…EISNHIIEFD (77 aa)) constitute a Carrier 1 domain. Ser-534 carries the O-(pantetheine 4'-phosphoryl)serine modification. The interval 605 to 913 (REITMTDVQR…ALGSKMDLLS (309 aa)) is condensation 1. The segment at 1071 to 1452 (VAAWPMSVAL…GRADHQVKVR (382 aa)) is adenylation 2. The region spanning 1550 to 1625 (DHTELVVSQV…SLAASVKKHL (76 aa)) is the Carrier 2 domain. Ser-1585 carries the post-translational modification O-(pantetheine 4'-phosphoryl)serine. The segment at 1662–2044 (MHKQASNPSS…FEQEICNLLD (383 aa)) is condensation 2.

The protein belongs to the NRP synthetase family.

Its pathway is secondary metabolite biosynthesis. In terms of biological role, nonribosomal peptide synthetase; part of the gene cluster that mediates the biosynthesis of an unusual class of epipolythiodioxopiperazines (ETPs) lacking the reactive thiol group important for toxicity. Firstly, L-tyrosine is prenylated by tcpD, before undergoing condensation with L-glycine in a reaction catalyzed by the NRPS tcpP leading to the diketopiperazine (DKP) backbone. Afterwards the alpha-carbon of tyrosine is oxidized by the cytochrome P450 tcpC to form a hydroxyl group. However, in contrast other ETP biosynthesis pathways studied so far, tcpC is not able to bishydroxylate the DKP at both alpha-carbon positions, but hydroxylates the alpha-carbon of the tyrosine part and the nitrogen of the glycine part. The next steps involve an alpha,beta-elimination reaction catalyzed by tcpI, a methylation by the methyltransferase tcpN the action of the four enzyme cascade tcpG/K/J/I. Due to a dysfunctional cytochrome P450 monooxygenase tcpC, the pathway leads to the biosynthesis of probable non-toxic metabolites lacking the reactive thiol group. The chain is Nonribosomal peptide synthetase tcpP from Claviceps purpurea (strain 20.1) (Ergot fungus).